Reading from the N-terminus, the 978-residue chain is Sensor histidine kinase TodS (978 aa).

The region spanning 32–103 (CEEHARIIFD…TQKRLVETAS (72 aa)) is the PAS 1 domain. Positions 108–162 (VRCDVEILGKSGGREVIAVDFSLLPICNEEGSIVYLLAEGRNITDKKKAEAMLAL) constitute a PAC 1 domain. The Histidine kinase 1 domain occupies 187–405 (KVSHELRTPL…LFQVKLPLNA (219 aa)). H190 carries the phosphohistidine; by autocatalysis modification. The Response regulatory domain maps to 452–567 (RVLIVEDNPD…ELRARVSNLV (116 aa)). D500 bears the 4-aspartylphosphate mark. The region spanning 611–681 (SEARWKAVYE…QRLANLLQGG (71 aa)) is the PAS 2 domain. The PAC 2 domain maps to 685–737 (YSVERSYLCKNGSTIWANASVSLMPQRVGESPVILQIIDDITEKKQAQENLNQ). Residues 757–974 (YIAHEINQPL…CFLVSIPARQ (218 aa)) enclose the Histidine kinase 2 domain. Residue H760 is modified to Phosphohistidine.

Autophosphorylated. Activation requires a sequential transfer of a phosphate group from a His in the primary transmitter domain, to an Asp in the receiver domain and to a His in the secondary transmitter domain.

It is found in the cytoplasm. It carries out the reaction ATP + protein L-histidine = ADP + protein N-phospho-L-histidine.. With respect to regulation, activity is regulated by agonists and antagonists. Binding of agonists such as toluene or benzene to TodS stimulates autophosphorylation at His-190. Activity is inhibited by antagonists such as o-xylene, o-chlorotoluene and trimethylbenzene isomers, which bind to TodS but do not stimulate autophosphorylation. Agonists and antagonists bind to the same PAS domain. In terms of biological role, member of the two-component regulatory system TodS/TodT involved in the regulation of toluene degradation. Phosphorylates TodT via a four-step phosphorelay in response to toluene. Can also be induced by benzene and ethylbenzene. This chain is Sensor histidine kinase TodS (todS), found in Pseudomonas putida (strain DOT-T1E).